A 146-amino-acid polypeptide reads, in one-letter code: VPIQKVQDDTKTLIKTVITRINDISHTQSVSSKQKVTGLDFIPGLHPILTLSKMDQTLAVYQQILTSMPSRNVIQISNDLENLRDLLHVLAFSKSCHLPWASGLETLDRLGGVLEASGYSTEVVALSRLQRSLQDMLWQLDLSPGC.

A disulfide bridge links Cys-96 with Cys-146.

It belongs to the leptin family.

Its subcellular location is the secreted. In terms of biological role, key player in the regulation of energy balance and body weight control. Once released into the circulation, has central and peripheral effects by binding LEPR, found in many tissues, which results in the activation of several major signaling pathways. In the hypothalamus, acts as an appetite-regulating factor that induces a decrease in food intake and an increase in energy consumption by inducing anorexinogenic factors and suppressing orexigenic neuropeptides, also regulates bone mass and secretion of hypothalamo-pituitary-adrenal hormones. In the periphery, increases basal metabolism, influences reproductive function, regulates pancreatic beta-cell function and insulin secretion, is pro-angiogenic for endothelial cell and affects innate and adaptive immunity. In the arcuate nucleus of the hypothalamus, activates by depolarization POMC neurons inducing FOS and SOCS3 expression to release anorexigenic peptides and inhibits by hyperpolarization NPY neurons inducing SOCS3 with a consequent reduction on release of orexigenic peptides. In addition to its known satiety inducing effect, has a modulatory role in nutrient absorption. In the intestine, reduces glucose absorption by enterocytes by activating PKC and leading to a sequential activation of p38, PI3K and ERK signaling pathways which exerts an inhibitory effect on glucose absorption. Acts as a growth factor on certain tissues, through the activation of different signaling pathways increases expression of genes involved in cell cycle regulation such as CCND1, via JAK2-STAT3 pathway, or VEGFA, via MAPK1/3 and PI3K-AKT1 pathways. May also play an apoptotic role via JAK2-STAT3 pathway and up-regulation of BIRC5 expression. Pro-angiogenic, has mitogenic activity on vascular endothelial cells and plays a role in matrix remodeling by regulating the expression of matrix metalloproteinases (MMPs) and tissue inhibitors of metalloproteinases (TIMPs). In innate immunity, modulates the activity and function of neutrophils by increasing chemotaxis and the secretion of oxygen radicals. Increases phagocytosis by macrophages and enhances secretion of pro-inflammatory mediators. Increases cytotoxic ability of NK cells. Plays a pro-inflammatory role, in synergy with IL1B, by inducing NOS2 which promotes the production of IL6, IL8 and Prostaglandin E2, through a signaling pathway that involves JAK2, PI3K, MAP2K1/MEK1 and MAPK14/p38. In adaptive immunity, promotes the switch of memory T-cells towards T helper-1 cell immune responses. Increases CD4(+)CD25(-) T-cell proliferation and reduces autophagy during TCR (T-cell receptor) stimulation, through MTOR signaling pathway activation and BCL2 up-regulation. This is Leptin (LEP) from Pongo pygmaeus (Bornean orangutan).